Here is a 211-residue protein sequence, read N- to C-terminus: Type II secretion system protein J (211 aa).

A propeptide spans 1–7 (MRPRAAG) (leader sequence). Phe-8 carries the post-translational modification N-methylphenylalanine. Residues 8–28 (FTLIEVLLATMLLVGGLALAF) form a helical membrane-spanning segment.

Belongs to the GSP J family.

Its subcellular location is the membrane. Its function is as follows. Involved in a type II secretion system (T2SS, formerly general secretion pathway, GSP) for the export of proteins. The protein is Type II secretion system protein J (xpsJ) of Xanthomonas campestris pv. campestris (strain ATCC 33913 / DSM 3586 / NCPPB 528 / LMG 568 / P 25).